Reading from the N-terminus, the 528-residue chain is Putative pumilio homolog 10 (528 aa).

The PUM-HD domain maps to 188–528 (EGSGASYPDE…KIFSKTILKK (341 aa)). Pumilio repeat units follow at residues 213-248 (EIYG…VIFL), 249-284 (EIID…MIVS), 285-323 (VLTS…ALVK), 325-360 (ALEP…FVVE), 361-396 (AATE…RLVA), 397-433 (EISR…LPFR), 434-465 (THCI…EIVR), and 466-503 (ELLS…RLVE).

The protein resides in the cytoplasm. Functionally, sequence-specific RNA-binding protein that regulates translation and mRNA stability by binding the 3'-UTR of target mRNAs. The protein is Putative pumilio homolog 10 (APUM10) of Arabidopsis thaliana (Mouse-ear cress).